The following is a 262-amino-acid chain: MILVLDAGNTNMVLGLYEDKNLIADWRLSTDPLRTADEYSIQVIQLFLQSNLRLEDVEGVIVSSVVPNIMYSVEHMVAKYFKKKPIIVGPGTKTGINIKYDNPKEVGADRIVNAVAAHEIYKKPLVIIDFGTATTFCAVTQSGDYLGGAIAPGVKISSEALFEKAAKLPRVELMKPSSVICKNTVSSMQAGMTYGYGGLVDHIVSKIKQELMDSGEKEPLVVATGGLAKLISEESETIDIIHPFLTLEGLRIIYEKNKDLDA.

ATP is bound at residue 6 to 13 (DAGNTNMV). Residues Tyr-100 and 107–110 (GADR) each bind substrate. The Proton acceptor role is filled by Asp-109. Asp-129 serves as a coordination point for K(+). Thr-132 contacts ATP. Residue Thr-184 coordinates substrate.

Belongs to the type III pantothenate kinase family. Homodimer. Requires NH4(+) as cofactor. It depends on K(+) as a cofactor.

The protein localises to the cytoplasm. The catalysed reaction is (R)-pantothenate + ATP = (R)-4'-phosphopantothenate + ADP + H(+). It functions in the pathway cofactor biosynthesis; coenzyme A biosynthesis; CoA from (R)-pantothenate: step 1/5. Catalyzes the phosphorylation of pantothenate (Pan), the first step in CoA biosynthesis. This chain is Type III pantothenate kinase, found in Clostridium tetani (strain Massachusetts / E88).